The following is a 334-amino-acid chain: Holliday junction branch migration complex subunit RuvB (334 aa).

Residues 1–182 (MNERMVDQSM…FGVHLRLEYY (182 aa)) are large ATPase domain (RuvB-L). Residues Leu-21, Arg-22, Gly-63, Lys-66, Thr-67, Thr-68, 129–131 (EDF), Arg-172, Tyr-182, and Arg-219 contribute to the ATP site. Thr-67 contributes to the Mg(2+) binding site. Residues 183-253 (NESDLKEIII…TTKHALGLLQ (71 aa)) are small ATPAse domain (RuvB-S). A head domain (RuvB-H) region spans residues 256–334 (QHGLDYIDHK…HFAKSNEERG (79 aa)). DNA contacts are provided by Arg-292, Arg-311, and Arg-316.

Belongs to the RuvB family. In terms of assembly, homohexamer. Forms an RuvA(8)-RuvB(12)-Holliday junction (HJ) complex. HJ DNA is sandwiched between 2 RuvA tetramers; dsDNA enters through RuvA and exits via RuvB. An RuvB hexamer assembles on each DNA strand where it exits the tetramer. Each RuvB hexamer is contacted by two RuvA subunits (via domain III) on 2 adjacent RuvB subunits; this complex drives branch migration. In the full resolvosome a probable DNA-RuvA(4)-RuvB(12)-RuvC(2) complex forms which resolves the HJ.

It localises to the cytoplasm. The enzyme catalyses ATP + H2O = ADP + phosphate + H(+). The RuvA-RuvB-RuvC complex processes Holliday junction (HJ) DNA during genetic recombination and DNA repair, while the RuvA-RuvB complex plays an important role in the rescue of blocked DNA replication forks via replication fork reversal (RFR). RuvA specifically binds to HJ cruciform DNA, conferring on it an open structure. The RuvB hexamer acts as an ATP-dependent pump, pulling dsDNA into and through the RuvAB complex. RuvB forms 2 homohexamers on either side of HJ DNA bound by 1 or 2 RuvA tetramers; 4 subunits per hexamer contact DNA at a time. Coordinated motions by a converter formed by DNA-disengaged RuvB subunits stimulates ATP hydrolysis and nucleotide exchange. Immobilization of the converter enables RuvB to convert the ATP-contained energy into a lever motion, pulling 2 nucleotides of DNA out of the RuvA tetramer per ATP hydrolyzed, thus driving DNA branch migration. The RuvB motors rotate together with the DNA substrate, which together with the progressing nucleotide cycle form the mechanistic basis for DNA recombination by continuous HJ branch migration. Branch migration allows RuvC to scan DNA until it finds its consensus sequence, where it cleaves and resolves cruciform DNA. The polypeptide is Holliday junction branch migration complex subunit RuvB (Staphylococcus aureus (strain N315)).